Consider the following 75-residue polypeptide: Sec-independent protein translocase protein TatA (75 aa).

A helical membrane pass occupies residues 1–21 (MGSFSIWHWLVVLAIVLLVFG). Residues 41–75 (KGMRDEDKPNAQLGDESRTQDASRTAQDEHDRNAR) form a disordered region.

This sequence belongs to the TatA/E family. As to quaternary structure, the Tat system comprises two distinct complexes: a TatABC complex, containing multiple copies of TatA, TatB and TatC subunits, and a separate TatA complex, containing only TatA subunits. Substrates initially bind to the TatABC complex, which probably triggers association of the separate TatA complex to form the active translocon.

It is found in the cell inner membrane. Part of the twin-arginine translocation (Tat) system that transports large folded proteins containing a characteristic twin-arginine motif in their signal peptide across membranes. TatA could form the protein-conducting channel of the Tat system. The polypeptide is Sec-independent protein translocase protein TatA (Stenotrophomonas maltophilia (strain K279a)).